The following is a 302-amino-acid chain: 1,2-dihydroxynaphthalene dioxygenase (302 aa).

VOC domains are found at residues 9-124 (ELGY…IFWG) and 149-270 (GLGH…PGWR). Histidine 152 is a Fe cation binding site. Substrate contacts are provided by residues histidine 152, 199–200 (DH), histidine 215, and tyrosine 256. A Fe cation-binding site is contributed by histidine 215. Glutamate 266 serves as a coordination point for Fe cation.

This sequence belongs to the extradiol ring-cleavage dioxygenase family. It depends on Fe(2+) as a cofactor.

The enzyme catalyses naphthalene-1,2-diol + O2 = 2-hydroxychromene-2-carboxylate + H(+). Its pathway is aromatic compound metabolism; naphthalene degradation. Its function is as follows. Involved in the naphthalene catabolic pathway. Catalyzes the meta-cleavage of 1,2-dihydroxynaphthalene (1,2-DHN) to yield 2-hydroxychromene-2-carboxylic acid. The sequence is that of 1,2-dihydroxynaphthalene dioxygenase (nahC) from Pseudomonas putida (Arthrobacter siderocapsulatus).